Reading from the N-terminus, the 346-residue chain is Histidinol-phosphate aminotransferase (346 aa).

Lys209 bears the N6-(pyridoxal phosphate)lysine mark.

The protein belongs to the class-II pyridoxal-phosphate-dependent aminotransferase family. Histidinol-phosphate aminotransferase subfamily. Homodimer. Requires pyridoxal 5'-phosphate as cofactor.

The catalysed reaction is L-histidinol phosphate + 2-oxoglutarate = 3-(imidazol-4-yl)-2-oxopropyl phosphate + L-glutamate. Its pathway is amino-acid biosynthesis; L-histidine biosynthesis; L-histidine from 5-phospho-alpha-D-ribose 1-diphosphate: step 7/9. The protein is Histidinol-phosphate aminotransferase of Vibrio vulnificus (strain YJ016).